A 274-amino-acid chain; its full sequence is Nitrogenase iron protein (274 aa).

8-15 is a binding site for ATP; it reads GKGGIGKS. C94 serves as a coordination point for [4Fe-4S] cluster. R97 carries the ADP-ribosylarginine; by dinitrogenase reductase ADP-ribosyltransferase modification. C131 is a binding site for [4Fe-4S] cluster.

This sequence belongs to the NifH/BchL/ChlL family. As to quaternary structure, homodimer. The cofactor is [4Fe-4S] cluster. Post-translationally, the reversible ADP-ribosylation of Arg-97 inactivates the nitrogenase reductase and regulates nitrogenase activity.

It carries out the reaction N2 + 8 reduced [2Fe-2S]-[ferredoxin] + 16 ATP + 16 H2O = H2 + 8 oxidized [2Fe-2S]-[ferredoxin] + 2 NH4(+) + 16 ADP + 16 phosphate + 6 H(+). Functionally, the key enzymatic reactions in nitrogen fixation are catalyzed by the nitrogenase complex, which has 2 components: the iron protein and the molybdenum-iron protein. This Chlorobium phaeobacteroides (strain DSM 266 / SMG 266 / 2430) protein is Nitrogenase iron protein.